A 325-amino-acid chain; its full sequence is NADH-quinone oxidoreductase subunit H (325 aa).

The next 8 helical transmembrane spans lie at 11–31, 81–101, 114–134, 154–174, 186–206, 237–257, 265–285, and 304–324; these read ILLT…CGAF, FIFT…FAIV, IGIL…LFAG, VSYE…AGSF, MWNI…GVAV, FFVG…TLFF, LPSF…FILI, and ICLP…LYNA.

The protein belongs to the complex I subunit 1 family. NDH-1 is composed of 13 different subunits. Subunits NuoA, H, J, K, L, M, N constitute the membrane sector of the complex.

It localises to the cell inner membrane. The enzyme catalyses a quinone + NADH + 5 H(+)(in) = a quinol + NAD(+) + 4 H(+)(out). NDH-1 shuttles electrons from NADH, via FMN and iron-sulfur (Fe-S) centers, to quinones in the respiratory chain. The immediate electron acceptor for the enzyme in this species is believed to be ubiquinone. Couples the redox reaction to proton translocation (for every two electrons transferred, four hydrogen ions are translocated across the cytoplasmic membrane), and thus conserves the redox energy in a proton gradient. This subunit may bind ubiquinone. The polypeptide is NADH-quinone oxidoreductase subunit H (Proteus mirabilis (strain HI4320)).